A 418-amino-acid chain; its full sequence is MDSLPDAILQYILSYLTSARDVAACNCVSKRWKESTDSVKSVVFHRNSFESIMETDDSDSIVRKMISSSRRLEELVVYSPFTSSGLASWMMHVSSSLRLLELRMDNLASEEVVVEGPLKLDCIGVAKNLEILKLWGVLMMSPPKWDMFPNLRSLEIVGAKMDDSSLSHALRACPNLSNLLLLACEGVKSISIDLPYLEHCKLDFYGQGNTLLVLTSQRLVSLDVQGCSWIRVPETKFLKNLSISSVTGRVYMVDFNNLSSLEALSIRGVQWCWDAICMILQQARDVKHLFMKVEFTGNEALQPFPEIDFVEFFNNHPKLQTFDIHGAMFAALCQKNSLKKLETGFTIPCLEEVVITVRSPLNAEQKMNTLESLVKYARGLKRMVIRILRMKSNHSSADDFCDDICKFRHMNEHLVHIE.

Positions 1 to 47 (MDSLPDAILQYILSYLTSARDVAACNCVSKRWKESTDSVKSVVFHRN) constitute an F-box domain.

The protein is F-box protein At1g10780 of Arabidopsis thaliana (Mouse-ear cress).